Here is a 638-residue protein sequence, read N- to C-terminus: 3D-(3,5/4)-trihydroxycyclohexane-1,2-dione hydrolase (638 aa).

Glu-67 contacts thiamine diphosphate. The thiamine pyrophosphate binding stretch occupies residues 442 to 523 (SLPGDLQRLW…INIMLFDNSG (82 aa)). Asp-494 and Asn-521 together coordinate Mg(2+).

This sequence belongs to the TPP enzyme family. It depends on Mg(2+) as a cofactor. Requires thiamine diphosphate as cofactor.

It catalyses the reaction 3D-3,5/4-trihydroxycyclohexane-1,2-dione + H2O = 5-deoxy-D-glucuronate + H(+). It functions in the pathway polyol metabolism; myo-inositol degradation into acetyl-CoA; acetyl-CoA from myo-inositol: step 3/7. In terms of biological role, involved in the cleavage of the C1-C2 bond of 3D-(3,5/4)-trihydroxycyclohexane-1,2-dione (THcHDO) to yield 5-deoxy-glucuronate (5DG). The sequence is that of 3D-(3,5/4)-trihydroxycyclohexane-1,2-dione hydrolase from Listeria monocytogenes serotype 4b (strain F2365).